The primary structure comprises 157 residues: Large ribosomal subunit protein eL24 (157 aa).

Residue K2 forms a Glycyl lysine isopeptide (Lys-Gly) (interchain with G-Cter in SUMO2) linkage. E4 carries the ADP-ribosyl glutamic acid modification. K27 is modified (N6-acetyllysine; alternate). K27 is covalently cross-linked (Glycyl lysine isopeptide (Lys-Gly) (interchain with G-Cter in SUMO2); alternate). Residue K35 forms a Glycyl lysine isopeptide (Lys-Gly) (interchain with G-Cter in SUMO2) linkage. K77 carries the post-translational modification N6-acetyllysine. T83 is subject to Phosphothreonine. Position 86 is a phosphoserine (S86). N6-acetyllysine is present on K93. Basic and acidic residues predominate over residues E106 to K117. The tract at residues E106–R157 is disordered. A compositionally biased stretch (low complexity) spans K123–Q140. N6-succinyllysine is present on K131. Residue K147 forms a Glycyl lysine isopeptide (Lys-Gly) (interchain with G-Cter in SUMO2) linkage. S149 is modified (phosphoserine).

This sequence belongs to the eukaryotic ribosomal protein eL24 family. As to quaternary structure, component of the large ribosomal subunit. In terms of processing, mono-ADP-ribosylation at Glu-4 by PARP16 inhibits polysome assembly and mRNA loading, thereby inhibiting protein translation.

The protein localises to the cytoplasm. Functionally, component of the large ribosomal subunit. The ribosome is a large ribonucleoprotein complex responsible for the synthesis of proteins in the cell. In Bos taurus (Bovine), this protein is Large ribosomal subunit protein eL24 (RPL24).